The following is a 714-amino-acid chain: FERM domain-containing protein 7 (714 aa).

The 281-residue stretch at 2 to 282 (LHLKVQFLDD…EYHAFFRLSE (281 aa)) folds into the FERM domain. The stretch at 537 to 558 (NIRMKSFQQDLQVLQEAIARTS) forms a coiled coil.

In terms of tissue distribution, expressed in liver, kidney, pancreas and at low levels in brain and heart. Expressed in embryonic brain and developing neural retina.

The protein localises to the cell projection. It is found in the neuron projection. It localises to the growth cone. Functionally, plays a role in neurite development, may be through the activation of the GTPase RAC1. Plays a role in the control of eye movement and gaze stability. This Homo sapiens (Human) protein is FERM domain-containing protein 7 (FRMD7).